The following is a 460-amino-acid chain: Lipase member H (460 aa).

An N-terminal signal peptide occupies residues 1 to 24 (MLLRFYFNGLLFVGCLLSWGRSDT). N-linked (GlcNAc...) asparagine glycosylation is found at N67 and N75. The active-site Nucleophile is S163. An N-linked (GlcNAc...) asparagine glycan is attached at N177. D187 (charge relay system) is an active-site residue. C242 and C255 are oxidised to a cystine. The active-site Charge relay system is H257. Disulfide bonds link C279-C290 and C293-C301. A glycan (N-linked (GlcNAc...) asparagine) is linked at N289. N366 is a glycosylation site (N-linked (GlcNAc...) asparagine). A disulfide bridge links C436 with C455.

The protein belongs to the AB hydrolase superfamily. Lipase family.

The protein localises to the secreted. The protein resides in the cell membrane. The catalysed reaction is 1-hexadecanoyl-2-(9Z-octadecenoyl)-sn-glycero-3-phosphate + H2O = 2-(9Z-octadecenoyl)-sn-glycero-3-phosphate + hexadecanoate + H(+). Functionally, hydrolyzes specifically phosphatidic acid (PA) to produce 2-acyl lysophosphatidic acid (LPA; a potent bioactive lipid mediator) and fatty acid. Does not hydrolyze other phospholipids, like phosphatidylserine (PS), phosphatidylcholine (PC) and phosphatidylethanolamine (PE) or triacylglycerol (TG). In Xenopus tropicalis (Western clawed frog), this protein is Lipase member H (liph).